The chain runs to 690 residues: NF-kappa-B-repressing factor (690 aa).

Residues 1 to 296 form an active repression domain region; it reads MEKILQMAEG…FKHTFGEDLV (296 aa). The Nuclear localization signal motif lies at 25 to 45; sequence KPSKGQKRHLSTCDGQNPPKK. 2 disordered regions span residues 27–87 and 132–163; these read SKGQ…NEQT and MYFDSGNPAPSTTSQQANSQSTPEPSPSQTFP. Residue K68 forms a Glycyl lysine isopeptide (Lys-Gly) (interchain with G-Cter in SUMO2) linkage. Over residues 142–163 the composition is skewed to low complexity; sequence STTSQQANSQSTPEPSPSQTFP. The DNA-binding element occupies 296-388; sequence VVCQIGMSSY…RVFLQDHCLA (93 aa). Residues 414–431 are compositionally biased toward polar residues; it reads PTYPSVKSSQCHTGSSPR. Residues 414–437 form a disordered region; that stretch reads PTYPSVKSSQCHTGSSPRGSGKKK. K500 participates in a covalent cross-link: Glycyl lysine isopeptide (Lys-Gly) (interchain with G-Cter in SUMO2). Residues 551 to 596 form the G-patch domain; that stretch reads EDNIGNQLLRKMGWTGGGLGKSGEGIREPISVKEQHKREGLGLDVE. The R3H domain occupies 600–664; it reads KIAKRDIEQI…DRYLVVGRKR (65 aa). Phosphoserine is present on S618. Residues K666 and K674 each participate in a glycyl lysine isopeptide (Lys-Gly) (interchain with G-Cter in SUMO2) cross-link.

As to quaternary structure, interacts with NF-kappa-B. Interacts with XRN2. Interacts (via G-patch domain) with DHX15; promoting the RNA helicase activity of DHX15. Widely and constitutively expressed. Expressed at lower level in colon, peripheral blood lymphocytes, lung and kidney.

The protein localises to the nucleus. It localises to the nucleolus. In terms of biological role, enhances the ATPase activity of DHX15 by acting like a brace that tethers mobile sections of DHX15 together, stabilizing a functional conformation with high RNA affinity of DHX15. Involved in the constitutive silencing of the interferon beta promoter, independently of the virus-induced signals, and in the inhibition of the basal and cytokine-induced iNOS promoter activity. Also involved in the regulation of IL-8 transcription. May also act as a DNA-binding transcription regulator: interacts with a specific negative regulatory element (NRE) 5'-AATTCCTCTGA-3' to mediate transcriptional repression of certain NK-kappa-B responsive genes. This Homo sapiens (Human) protein is NF-kappa-B-repressing factor.